The sequence spans 135 residues: uncharacterized protein (135 aa).

The next 4 membrane-spanning stretches (helical) occupy residues 7–25 (WSAAVLAAAVSFLYGEWTI), 29–51 (ILLTLVVIDYGTGLVAAGVTGNI), 64–85 (VFIFVMVAIAHMIDTVLLEVGI), and 89–108 (ALIFMAAVVFYIVNELISIF).

It belongs to the bacteriophage holin family. Cp-1 holin subfamily.

It localises to the cell membrane. This is an uncharacterized protein from Halalkalibacterium halodurans (strain ATCC BAA-125 / DSM 18197 / FERM 7344 / JCM 9153 / C-125) (Bacillus halodurans).